A 227-amino-acid polypeptide reads, in one-letter code: Cytochrome c oxidase subunit 2 (227 aa).

The Mitochondrial intermembrane portion of the chain corresponds to 1-14 (MAHPVQLSLQDATS). The helical transmembrane segment at 15-45 (PIMEELITFHDHAFMAMSLISFLVLYALALT) threads the bilayer. The Mitochondrial matrix segment spans residues 46–59 (LTTKLTNTNITDAQ). Residues 60-87 (EMETIWTILPAVILILIALPSLRVLYLT) form a helical membrane-spanning segment. Residues 88 to 227 (DEVNDPSLTI…IFEMGPVFTL (140 aa)) are Mitochondrial intermembrane-facing. Residues His-161, Cys-196, Glu-198, Cys-200, His-204, and Met-207 each coordinate Cu cation. Position 198 (Glu-198) interacts with Mg(2+).

Belongs to the cytochrome c oxidase subunit 2 family. Component of the cytochrome c oxidase (complex IV, CIV), a multisubunit enzyme composed of 14 subunits. The complex is composed of a catalytic core of 3 subunits MT-CO1, MT-CO2 and MT-CO3, encoded in the mitochondrial DNA, and 11 supernumerary subunits COX4I, COX5A, COX5B, COX6A, COX6B, COX6C, COX7A, COX7B, COX7C, COX8 and NDUFA4, which are encoded in the nuclear genome. The complex exists as a monomer or a dimer and forms supercomplexes (SCs) in the inner mitochondrial membrane with NADH-ubiquinone oxidoreductase (complex I, CI) and ubiquinol-cytochrome c oxidoreductase (cytochrome b-c1 complex, complex III, CIII), resulting in different assemblies (supercomplex SCI(1)III(2)IV(1) and megacomplex MCI(2)III(2)IV(2)). Found in a complex with TMEM177, COA6, COX18, COX20, SCO1 and SCO2. Interacts with TMEM177 in a COX20-dependent manner. Interacts with COX20. Interacts with COX16. Requires Cu cation as cofactor.

The protein resides in the mitochondrion inner membrane. It carries out the reaction 4 Fe(II)-[cytochrome c] + O2 + 8 H(+)(in) = 4 Fe(III)-[cytochrome c] + 2 H2O + 4 H(+)(out). Functionally, component of the cytochrome c oxidase, the last enzyme in the mitochondrial electron transport chain which drives oxidative phosphorylation. The respiratory chain contains 3 multisubunit complexes succinate dehydrogenase (complex II, CII), ubiquinol-cytochrome c oxidoreductase (cytochrome b-c1 complex, complex III, CIII) and cytochrome c oxidase (complex IV, CIV), that cooperate to transfer electrons derived from NADH and succinate to molecular oxygen, creating an electrochemical gradient over the inner membrane that drives transmembrane transport and the ATP synthase. Cytochrome c oxidase is the component of the respiratory chain that catalyzes the reduction of oxygen to water. Electrons originating from reduced cytochrome c in the intermembrane space (IMS) are transferred via the dinuclear copper A center (CU(A)) of subunit 2 and heme A of subunit 1 to the active site in subunit 1, a binuclear center (BNC) formed by heme A3 and copper B (CU(B)). The BNC reduces molecular oxygen to 2 water molecules using 4 electrons from cytochrome c in the IMS and 4 protons from the mitochondrial matrix. The polypeptide is Cytochrome c oxidase subunit 2 (MT-CO2) (Macaca fascicularis (Crab-eating macaque)).